Reading from the N-terminus, the 130-residue chain is uncharacterized protein (130 aa).

This is an uncharacterized protein from Orgyia pseudotsugata multicapsid polyhedrosis virus (OpMNPV).